The primary structure comprises 306 residues: Homoserine O-succinyltransferase (306 aa).

Cys142 functions as the Acyl-thioester intermediate in the catalytic mechanism. 2 residues coordinate substrate: Lys163 and Ser192. The active-site Proton acceptor is His233. The active site involves Glu235. Arg247 serves as a coordination point for substrate.

Belongs to the MetA family.

Its subcellular location is the cytoplasm. The catalysed reaction is L-homoserine + succinyl-CoA = O-succinyl-L-homoserine + CoA. The protein operates within amino-acid biosynthesis; L-methionine biosynthesis via de novo pathway; O-succinyl-L-homoserine from L-homoserine: step 1/1. In terms of biological role, transfers a succinyl group from succinyl-CoA to L-homoserine, forming succinyl-L-homoserine. The chain is Homoserine O-succinyltransferase from Pelagibacterium halotolerans (strain DSM 22347 / JCM 15775 / CGMCC 1.7692 / B2).